Here is a 162-residue protein sequence, read N- to C-terminus: ATP synthase subunit b (162 aa).

The helical transmembrane segment at 6–26 (PDIGLLFWMLLSFGIVFFVAA) threads the bilayer.

It belongs to the ATPase B chain family. F-type ATPases have 2 components, F(1) - the catalytic core - and F(0) - the membrane proton channel. F(1) has five subunits: alpha(3), beta(3), gamma(1), delta(1), epsilon(1). F(0) has three main subunits: a(1), b(2) and c(10-14). The alpha and beta chains form an alternating ring which encloses part of the gamma chain. F(1) is attached to F(0) by a central stalk formed by the gamma and epsilon chains, while a peripheral stalk is formed by the delta and b chains.

It is found in the cell inner membrane. F(1)F(0) ATP synthase produces ATP from ADP in the presence of a proton or sodium gradient. F-type ATPases consist of two structural domains, F(1) containing the extramembraneous catalytic core and F(0) containing the membrane proton channel, linked together by a central stalk and a peripheral stalk. During catalysis, ATP synthesis in the catalytic domain of F(1) is coupled via a rotary mechanism of the central stalk subunits to proton translocation. Its function is as follows. Component of the F(0) channel, it forms part of the peripheral stalk, linking F(1) to F(0). This is ATP synthase subunit b from Azobacteroides pseudotrichonymphae genomovar. CFP2.